The sequence spans 229 residues: Protein-lysine N-methyltransferase EFM4 (229 aa).

The protein belongs to the class I-like SAM-binding methyltransferase superfamily. EFM4 family.

It localises to the cytoplasm. The enzyme catalyses L-lysyl-[protein] + S-adenosyl-L-methionine = N(6)-methyl-L-lysyl-[protein] + S-adenosyl-L-homocysteine + H(+). It catalyses the reaction N(6)-methyl-L-lysyl-[protein] + S-adenosyl-L-methionine = N(6),N(6)-dimethyl-L-lysyl-[protein] + S-adenosyl-L-homocysteine + H(+). Its function is as follows. S-adenosyl-L-methionine-dependent protein-lysine N-methyltransferase that mono- and dimethylates elongation factor 1-alpha (TEF1 and TEF2) at 'Lys-316'. May play a role in intracellular transport. The polypeptide is Protein-lysine N-methyltransferase EFM4 (Saccharomyces cerevisiae (strain ATCC 204508 / S288c) (Baker's yeast)).